The following is a 997-amino-acid chain: DNA polymerase I (997 aa).

One can recognise a 5'-3' exonuclease domain in the interval 174-261; it reads VMPTQLLDLF…VPCVFSLEDS (88 aa). A 3'-5' exonuclease domain is found at 428-589; that stretch reads VPDVSLHTES…LYHYLKLRLE (162 aa).

It belongs to the DNA polymerase type-A family.

The catalysed reaction is DNA(n) + a 2'-deoxyribonucleoside 5'-triphosphate = DNA(n+1) + diphosphate. In addition to polymerase activity, this DNA polymerase exhibits 3'-5' and 5'-3' exonuclease activity. In Treponema pallidum (strain Nichols), this protein is DNA polymerase I (polA).